A 326-amino-acid chain; its full sequence is Bifunctional pinoresinol-lariciresinol reductase (326 aa).

NADP(+)-binding positions include 25-31 (GGTGYLG), Arg-50, and Lys-59. Lys-153 (proton acceptor) is an active-site residue. Arg-157 contributes to the NADP(+) binding site. His-285 provides a ligand contact to substrate.

It belongs to the NmrA-type oxidoreductase family. Isoflavone reductase subfamily. Dimer.

It carries out the reaction (+)-lariciresinol + NADP(+) = (+)-pinoresinol + NADPH + H(+). The enzyme catalyses (-)-secoisolariciresinol + NADP(+) = (+)-lariciresinol + NADPH + H(+). Its function is as follows. Reductase involved in lignan biosynthesis. Catalyzes the enantioselective conversion of (+)-pinoresinol into (+)-lariciresinol and of (+)-lariciresinol into (-)-secoisolariciresinol. Abstracts the 4R-hydride from the NADPH cofactor during catalysis. This Linum album (Flax) protein is Bifunctional pinoresinol-lariciresinol reductase (PLR1).